Here is a 635-residue protein sequence, read N- to C-terminus: Threonine--tRNA ligase (635 aa).

One can recognise a TGS domain in the interval 1–61 (MINISFPDGS…ENDCKLRILT (61 aa)). Positions 242–533 (DHRKLGKELD…LIEEYAGCFP (292 aa)) are catalytic. Cys333, His384, and His510 together coordinate Zn(2+).

It belongs to the class-II aminoacyl-tRNA synthetase family. In terms of assembly, homodimer. Requires Zn(2+) as cofactor.

It is found in the cytoplasm. The enzyme catalyses tRNA(Thr) + L-threonine + ATP = L-threonyl-tRNA(Thr) + AMP + diphosphate + H(+). Catalyzes the attachment of threonine to tRNA(Thr) in a two-step reaction: L-threonine is first activated by ATP to form Thr-AMP and then transferred to the acceptor end of tRNA(Thr). Also edits incorrectly charged L-seryl-tRNA(Thr). The polypeptide is Threonine--tRNA ligase (Rickettsia akari (strain Hartford)).